Here is a 400-residue protein sequence, read N- to C-terminus: Large envelope protein (400 aa).

Position 1 is an N-acetylmethionine (methionine 1). Glycine 2 carries N-myristoyl glycine; by host lipidation. The tract at residues 2–119 (GGWSSKPRQG…PPLRDSHPQA (118 aa)) is pre-S1. The tract at residues 2 to 174 (GGWSSKPRQG…FSRIGDPALN (173 aa)) is pre-S. The Virion surface; in external conformation segment spans residues 2–181 (GGWSSKPRQG…ALNMENITSG (180 aa)). The Intravirion; in internal conformation portion of the chain corresponds to 2 to 253 (GGWSSKPRQG…PGYRWMCLRR (252 aa)). Residue tryptophan 4 is glycosylated (N-linked (GlcNAc...) asparagine). The interval 85-118 (LTTVPAAPPPASSNRQSGKQPTPISPPLRDSHPQ) is disordered. A compositionally biased stretch (polar residues) spans 96–106 (SSNRQSGKQPT). The segment at 120–174 (MQWNSTTFHQTLQDPRVRGLYFPAGGSSSGTVNPVPTTASPISSIFSRIGDPALN) is pre-S2. Residues 182–202 (FLGPLLVLQAGFFLLTRILTI) traverse the membrane as a helical segment. Over 203 to 253 (PQSLDSWWTSLNFLGGTTVCLGQNSQSPISNHSPTSCPPTCPGYRWMCLRR) the chain is Intravirion; in external conformation. A helical transmembrane segment spans residues 254 to 274 (FIIFLFILLLCLIFLLVLLDY). The Virion surface segment spans residues 275 to 348 (QGMLPVCPLI…WASARFSWLS (74 aa)). N-linked (GlcNAc...) asparagine; by host glycosylation is present at asparagine 320. The chain crosses the membrane as a helical span at residues 349–369 (LLVPFVQWFVGLSPTVWLSVI). Topologically, residues 370–375 (WMMWYW) are intravirion. The chain crosses the membrane as a helical span at residues 376–398 (GPSLYSILSPFLPLLPIFFCLWV). Residues 399-400 (YI) are Virion surface-facing.

This sequence belongs to the orthohepadnavirus major surface antigen family. As to quaternary structure, in its internal form (Li-HBsAg), interacts with the capsid protein and with the isoform S. Interacts with host chaperone CANX. In terms of assembly, associates with host chaperone CANX through its pre-S2 N glycan; this association may be essential for isoform M proper secretion. Interacts with isoform L. Interacts with the antigens of satellite virus HDV (HDVAgs); this interaction is required for encapsidation of HDV genomic RNA. Post-translationally, isoform M is N-terminally acetylated by host at a ratio of 90%, and N-glycosylated by host at the pre-S2 region. Myristoylated.

The protein localises to the virion membrane. Functionally, the large envelope protein exists in two topological conformations, one which is termed 'external' or Le-HBsAg and the other 'internal' or Li-HBsAg. In its external conformation the protein attaches the virus to cell receptors and thereby initiating infection. This interaction determines the species specificity and liver tropism. This attachment induces virion internalization predominantly through caveolin-mediated endocytosis. The large envelope protein also assures fusion between virion membrane and endosomal membrane. In its internal conformation the protein plays a role in virion morphogenesis and mediates the contact with the nucleocapsid like a matrix protein. Its function is as follows. The middle envelope protein plays an important role in the budding of the virion. It is involved in the induction of budding in a nucleocapsid independent way. In this process the majority of envelope proteins bud to form subviral lipoprotein particles of 22 nm of diameter that do not contain a nucleocapsid. In Homo sapiens (Human), this protein is Large envelope protein.